Here is a 129-residue protein sequence, read N- to C-terminus: Small ribosomal subunit protein uS9 (129 aa).

Belongs to the universal ribosomal protein uS9 family.

The sequence is that of Small ribosomal subunit protein uS9 (rpsI) from Helicobacter pylori (strain J99 / ATCC 700824) (Campylobacter pylori J99).